The sequence spans 319 residues: Beta-ketoacyl-[acyl-carrier-protein] synthase III (319 aa).

Residues C112 and H246 contribute to the active site. Residues Q247–R251 form an ACP-binding region. N276 is a catalytic residue.

The protein belongs to the thiolase-like superfamily. FabH family. In terms of assembly, homodimer.

It is found in the cytoplasm. The enzyme catalyses malonyl-[ACP] + acetyl-CoA + H(+) = 3-oxobutanoyl-[ACP] + CO2 + CoA. Its pathway is lipid metabolism; fatty acid biosynthesis. In terms of biological role, catalyzes the condensation reaction of fatty acid synthesis by the addition to an acyl acceptor of two carbons from malonyl-ACP. Catalyzes the first condensation reaction which initiates fatty acid synthesis and may therefore play a role in governing the total rate of fatty acid production. Possesses both acetoacetyl-ACP synthase and acetyl transacylase activities. Its substrate specificity determines the biosynthesis of branched-chain and/or straight-chain of fatty acids. The protein is Beta-ketoacyl-[acyl-carrier-protein] synthase III of Psychromonas ingrahamii (strain DSM 17664 / CCUG 51855 / 37).